The chain runs to 352 residues: Dihydroorotate dehydrogenase (quinone) (352 aa).

FMN is bound by residues 68 to 72 (AGFDK) and T92. K72 is a binding site for substrate. Substrate is bound at residue 117 to 121 (NAMGF). Residues N146 and N179 each contribute to the FMN site. N179 contributes to the substrate binding site. S182 acts as the Nucleophile in catalysis. N184 is a binding site for substrate. The FMN site is built by K215 and T243. 244–245 (NT) is a substrate binding site. FMN contacts are provided by residues G263, G292, and 313–314 (YS).

Belongs to the dihydroorotate dehydrogenase family. Type 2 subfamily. In terms of assembly, monomer. The cofactor is FMN.

The protein localises to the cell membrane. It carries out the reaction (S)-dihydroorotate + a quinone = orotate + a quinol. It participates in pyrimidine metabolism; UMP biosynthesis via de novo pathway; orotate from (S)-dihydroorotate (quinone route): step 1/1. Its function is as follows. Catalyzes the conversion of dihydroorotate to orotate with quinone as electron acceptor. In Sulfurimonas denitrificans (strain ATCC 33889 / DSM 1251) (Thiomicrospira denitrificans (strain ATCC 33889 / DSM 1251)), this protein is Dihydroorotate dehydrogenase (quinone).